We begin with the raw amino-acid sequence, 236 residues long: Terpene cyclase andB (236 aa).

7 helical membrane passes run 13-33 (TVVNLLGSASGIGWILNYILM), 45-65 (MSMLPLCCNIAWEFVYGILCP), 70-90 (VVRPVILSWLVLNCLVVYAAI), 106-126 (HLPLLFTVGIAACTGFHIALI), 135-155 (FLWSARSCQVLLSIGGLFQLL), 166-186 (VLWLSRFLGSICGVLKMTLMW), and 200-220 (LTAYCIALWIISDVLYGVVFY).

This sequence belongs to the paxB family.

The protein resides in the membrane. It participates in secondary metabolite biosynthesis; terpenoid biosynthesis. Its function is as follows. Terpene cyclase; part of the gene cluster that mediates the biosynthesis of anditomin, a fungal meroterpenoid. The first step of the pathway is the synthesis of 3,5-dimethylorsellinic acid (DMOA) by the polyketide synthase andM. DMOA is then converted to the phthalide compound 5,7-dihydroxy-4,6-dimethylphthalide (DHDMP) by the cytochrome P450 monooxygenase andK, which is further prenylated by the prenyltransferase andD to yield farnesyl-DHDMP. Further epoxidation by the FAD-dependent monooxygenase andE leads to epoxyfarnesyl-DHDMP. The next step involves the terpene cyclase andB that converts epoxyfarnesyl-DHDMP into preandiloid A through opening of the epoxide ring followed by the cyclization of the farnesyl moiety. Preandiloid A is in turn oxidized at the C-3 hydroxyl group to yield preandiloid B by the dehydrogenase andC. The dioxygenase andA is solely responsible for the dehydrogenation of preandiloid B leading to the enone preandiloid C, as well as for the intriguing structural rearrangement to generate the bicyclo[2.2.2]octane core, transforming preandiloid C into andiconin. FAD-binding monooxygenase andJ then produces andilesin D which is reduced by dehydrogenase andI to yield andilesin A. Action of acetyltransferase andG followed by a spontaneous acetate elimination leads then to andilesin B, which is in turn substrate of the short chain dehydrogenase andH to yield andilesin C. Finally, the dioxygenase andF catalyzes the transformation of andilesin C to anditomin. The sequence is that of Terpene cyclase andB from Emericella variicolor (Aspergillus stellatus).